The following is a 669-amino-acid chain: uncharacterized protein (669 aa).

Transmembrane regions (helical) follow at residues 39–61, 124–146, 153–175, 190–212, 221–243, and 263–285; these read LCPL…GTSW, ISLW…LISI, GIIY…YALG, GLAF…FFGV, FAPG…QTAL, and IAAG…IRYL. 2 consecutive RCK C-terminal domains span residues 316-397 and 398-483; these read AGSL…KLIG and KESD…LGGR. 5 helical membrane passes run 484-506, 516-538, 558-580, 585-607, and 645-667; these read PILN…GYIF, IPFA…YWRS, IGLN…ESFH, IWVA…VVGI, and VPYP…FAML.

This sequence belongs to the AAE transporter (TC 2.A.81) family.

The protein resides in the cell membrane. This is an uncharacterized protein from Desulfotalea psychrophila (strain LSv54 / DSM 12343).